A 185-amino-acid polypeptide reads, in one-letter code: Signal peptidase I P (185 aa).

Over 1-14 the chain is Cytoplasmic; that stretch reads MFDKEKRKKSNIID. The chain crosses the membrane as a helical span at residues 15 to 34; sequence WIKAILIALILVFLVRTFLF. Residues 35–185 are Extracellular-facing; that stretch reads EPYIVQGESM…FPLDRIRHAK (151 aa). Active-site residues include S43 and K85.

This sequence belongs to the peptidase S26 family.

It is found in the cell membrane. The enzyme catalyses Cleavage of hydrophobic, N-terminal signal or leader sequences from secreted and periplasmic proteins.. This chain is Signal peptidase I P (sipP), found in Bacillus subtilis subsp. natto.